The chain runs to 175 residues: UPF0398 protein SPP_0409 (175 aa).

It belongs to the UPF0398 family.

The sequence is that of UPF0398 protein SPP_0409 from Streptococcus pneumoniae (strain P1031).